A 77-amino-acid chain; its full sequence is uncharacterized protein (77 aa).

This is an uncharacterized protein from Vaccinia virus (strain Western Reserve) (VACV).